Reading from the N-terminus, the 231-residue chain is ATP phosphoribosyltransferase (231 aa).

Belongs to the ATP phosphoribosyltransferase family. Short subfamily. In terms of assembly, heteromultimer composed of HisG and HisZ subunits.

It localises to the cytoplasm. The catalysed reaction is 1-(5-phospho-beta-D-ribosyl)-ATP + diphosphate = 5-phospho-alpha-D-ribose 1-diphosphate + ATP. The protein operates within amino-acid biosynthesis; L-histidine biosynthesis; L-histidine from 5-phospho-alpha-D-ribose 1-diphosphate: step 1/9. In terms of biological role, catalyzes the condensation of ATP and 5-phosphoribose 1-diphosphate to form N'-(5'-phosphoribosyl)-ATP (PR-ATP). Has a crucial role in the pathway because the rate of histidine biosynthesis seems to be controlled primarily by regulation of HisG enzymatic activity. This Rhizobium meliloti (strain 1021) (Ensifer meliloti) protein is ATP phosphoribosyltransferase (hisG).